The following is a 406-amino-acid chain: Phosphopentomutase (406 aa).

Aspartate 10, aspartate 305, histidine 310, aspartate 346, histidine 347, and histidine 358 together coordinate Mn(2+).

It belongs to the phosphopentomutase family. Requires Mn(2+) as cofactor.

Its subcellular location is the cytoplasm. It carries out the reaction 2-deoxy-alpha-D-ribose 1-phosphate = 2-deoxy-D-ribose 5-phosphate. The enzyme catalyses alpha-D-ribose 1-phosphate = D-ribose 5-phosphate. Its pathway is carbohydrate degradation; 2-deoxy-D-ribose 1-phosphate degradation; D-glyceraldehyde 3-phosphate and acetaldehyde from 2-deoxy-alpha-D-ribose 1-phosphate: step 1/2. Its function is as follows. Isomerase that catalyzes the conversion of deoxy-ribose 1-phosphate (dRib-1-P) and ribose 1-phosphate (Rib-1-P) to deoxy-ribose 5-phosphate (dRib-5-P) and ribose 5-phosphate (Rib-5-P), respectively. The protein is Phosphopentomutase of Vibrio campbellii (strain ATCC BAA-1116).